The following is a 404-amino-acid chain: MKSKLKRQLPAMVIVCLLMICVTGCWSSREIEDLGLTFAIAIDKGKETNTEKELKEEGGSYPKKDNITLTYQFVNEKAAGAGTSGGGGSGQGAQKAYINISETGDSLQQIGSEVALRRDREVFSPHLKVVVMSEDVLHTFPIDEMLDQFFRDNEIRLSCLVLSAKGEARDALQLKENGEIPAFRLIGLGENEHKVSRILPPMTLAKLIGKLHSGSSFLLQNVVAANGAVKYSGAAVINGKSKKMIGTLNEYETEGITWIRGEGKGGVVKSHDKKSQQTLAYDINKIKSRIQPIVKGKDISFHVDIESEGDLVENWNTKEALDTQFIDRLETTIENEVKKIVGQVLKKIQHDYKADVAGFDESFRLTYPHLWKRVKNNWDDTFSKADITYSVNVTITHFGTVKTQ.

The N-terminal stretch at 1–24 is a signal peptide; sequence MKSKLKRQLPAMVIVCLLMICVTG. Cys-25 carries N-palmitoyl cysteine lipidation. Residue Cys-25 is the site of S-diacylglycerol cysteine attachment.

This sequence belongs to the GerABKC lipoprotein family.

The protein localises to the cell membrane. Its function is as follows. May be involved in spore germination. The chain is Spore germination protein YndF (yndF) from Bacillus subtilis (strain 168).